The following is a 553-amino-acid chain: Non-SCF-type F-box protein ROY1 (553 aa).

Positions 3-49 (FQDQDIFIVFSHASLFLNQNDLLSLSLTSKKMHDMIAIPRLYSNIHI) constitute an F-box domain.

Interacts with SKP1 and YPT32; SKP1 is required for the interaction with YPT32.

Its subcellular location is the cytoplasm. The protein localises to the nucleus. It localises to the cytoplasmic vesicle membrane. Functionally, non-SCF-type F-box protein involved in the endocytic with the vacuolar sorting pathway. Acts as a repressor of YPT52 by inhibiting the formation of active, GTP-bound, YPT52. Involved in the defense mechanism against methylmercury toxicity. This chain is Non-SCF-type F-box protein ROY1 (ROY1), found in Saccharomyces cerevisiae (strain ATCC 204508 / S288c) (Baker's yeast).